Reading from the N-terminus, the 638-residue chain is Threonine--tRNA ligase (638 aa).

The region spanning 1-61 (MPVITLPDGS…DADAQLQIIT (61 aa)) is the TGS domain. Residues 243-534 (DHRKIGKALN…LTEEFAGFFP (292 aa)) form a catalytic region. Residues Cys-334, His-385, and His-511 each coordinate Zn(2+).

This sequence belongs to the class-II aminoacyl-tRNA synthetase family. As to quaternary structure, homodimer. Zn(2+) is required as a cofactor.

The protein localises to the cytoplasm. It carries out the reaction tRNA(Thr) + L-threonine + ATP = L-threonyl-tRNA(Thr) + AMP + diphosphate + H(+). In terms of biological role, catalyzes the attachment of threonine to tRNA(Thr) in a two-step reaction: L-threonine is first activated by ATP to form Thr-AMP and then transferred to the acceptor end of tRNA(Thr). Also edits incorrectly charged L-seryl-tRNA(Thr). In Alteromonas mediterranea (strain DSM 17117 / CIP 110805 / LMG 28347 / Deep ecotype), this protein is Threonine--tRNA ligase.